The primary structure comprises 360 residues: Glutaminyl-peptide cyclotransferase (360 aa).

A signal peptide spans 1–23; that stretch reads MKYLKILIIVTIFFFLLINVINC. A glycan (N-linked (GlcNAc...) asparagine) is linked at N135. Position 165 (D165) interacts with Zn(2+). Catalysis depends on E199, which acts as the Proton acceptor. Residue E200 coordinates Zn(2+). The active-site Proton acceptor is the D251. H330 contacts Zn(2+).

Belongs to the glutaminyl-peptide cyclotransferase family.

It localises to the secreted. The enzyme catalyses N-terminal L-glutaminyl-[peptide] = N-terminal 5-oxo-L-prolyl-[peptide] + NH4(+). In terms of biological role, responsible for the biosynthesis of pyroglutamyl peptides. Has a bias against acidic and tryptophan residues adjacent to the N-terminal glutaminyl residue and a lack of importance of chain length after the second residue. Also catalyzes N-terminal pyroglutamate formation. The chain is Glutaminyl-peptide cyclotransferase (qpct) from Dictyostelium discoideum (Social amoeba).